Consider the following 156-residue polypeptide: MPRKGPVAKRDVLPDPIYNSKLVTRLINKMMVDGKRGKSQAILYSAFDIIAQETGKDPMEVFEQAMKNIMPLLEVKARRVGGANYQVPIEVRADRRSTLGLRWLVNYARLRGEKTMEVRVAREIMDAANNTGASVKKREDTHKMADANRAFAHYRW.

It belongs to the universal ribosomal protein uS7 family. In terms of assembly, part of the 30S ribosomal subunit. Contacts proteins S9 and S11.

Functionally, one of the primary rRNA binding proteins, it binds directly to 16S rRNA where it nucleates assembly of the head domain of the 30S subunit. Is located at the subunit interface close to the decoding center, probably blocks exit of the E-site tRNA. The polypeptide is Small ribosomal subunit protein uS7 (Listeria innocua serovar 6a (strain ATCC BAA-680 / CLIP 11262)).